The following is a 596-amino-acid chain: Cytochrome P450 monooxygenase FUM15 (596 aa).

Residues aspartate 476–glutamate 512 are disordered. A compositionally biased stretch (basic and acidic residues) spans glycine 484–serine 503. A heme-binding site is contributed by cysteine 536.

This sequence belongs to the cytochrome P450 family. It depends on heme as a cofactor.

Its subcellular location is the endoplasmic reticulum. Its pathway is secondary metabolite biosynthesis. Cytochrome P450 monooxygenase; part of the gene cluster that mediates the biosynthesis of fumonisins B1 (FB1), B2 (FB2), B3 (FB3), and B4 (FB4), which are carcinogenic mycotoxins. Within the pathway, FUM15 may be responsible for the hydroxylations at positions C-14 and/or C-15. Also plays a role in self-protection from FB1 toxicity, probably through derivatization of FB1, and may contribute to ceramide biosynthesis. The biosynthesis starts with the FUM1-catalyzed carbon chain assembly from one molecule of acetyl-CoA, eight molecules of malonyl-CoA, and two molecules of methionine (in S-adenosyl form). The C18 polyketide chain is released from the enzyme by a nucleophilic attack of a carbanion, which is derived from R-carbon of alanine by decarboxylation, on the carbonyl carbon of polyketide acyl chain. This step is catalyzed by the pyridoxal 5'-phosphate-dependent aminoacyl transferase FUM8. The resultant 3-keto intermediate is then stereospecifically reduced to a 3-hydroxyl product by reductase FUM13. Subsequent oxidations at C-10 by the cytochrome P450 monooxygenase FUM2, C-14 and C-15 by FUM6, FUM12 or FUM15, tricarballylic esterification of the hydroxyl groups on C-14 and C-15 by acyltransferase FUM14, and C-5 hydroxylation by 2-keto-glutarate-dependent dioxygenase FUM3 furnish the biosynthesis of fumonisins. The tricarballylic moieties are most likely derived from the citric acid cycle, and their addition to the carbon backbone may involve FUM7, FUM10, FUM11 and FUM14. In Gibberella moniliformis (strain M3125 / FGSC 7600) (Maize ear and stalk rot fungus), this protein is Cytochrome P450 monooxygenase FUM15.